The following is a 154-amino-acid chain: Ribonuclease H (154 aa).

Residues 1–142 (MLKKIDLYTD…CDELAREAAS (142 aa)) form the RNase H type-1 domain. Residues Asp-10, Glu-48, Asp-70, and Asp-134 each coordinate Mg(2+). A disordered region spans residues 133–154 (CDELAREAASGKQLAEDTGYQP).

Belongs to the RNase H family. In terms of assembly, monomer. Mg(2+) serves as cofactor.

The protein localises to the cytoplasm. The enzyme catalyses Endonucleolytic cleavage to 5'-phosphomonoester.. Endonuclease that specifically degrades the RNA of RNA-DNA hybrids. This Aeromonas hydrophila subsp. hydrophila (strain ATCC 7966 / DSM 30187 / BCRC 13018 / CCUG 14551 / JCM 1027 / KCTC 2358 / NCIMB 9240 / NCTC 8049) protein is Ribonuclease H.